Reading from the N-terminus, the 217-residue chain is GTP cyclohydrolase-2 (217 aa).

A GTP-binding site is contributed by 50-54 (RIHSE). Zn(2+) is bound by residues Cys-55, Cys-66, and Cys-68. GTP-binding positions include Gln-71, 93 to 95 (EGR), and Thr-115. Asp-127 (proton acceptor) is an active-site residue. Arg-129 acts as the Nucleophile in catalysis. Thr-150 and Lys-155 together coordinate GTP.

Belongs to the GTP cyclohydrolase II family. It depends on Zn(2+) as a cofactor.

It catalyses the reaction GTP + 4 H2O = 2,5-diamino-6-hydroxy-4-(5-phosphoribosylamino)-pyrimidine + formate + 2 phosphate + 3 H(+). It functions in the pathway cofactor biosynthesis; riboflavin biosynthesis; 5-amino-6-(D-ribitylamino)uracil from GTP: step 1/4. Functionally, catalyzes the conversion of GTP to 2,5-diamino-6-ribosylamino-4(3H)-pyrimidinone 5'-phosphate (DARP), formate and pyrophosphate. The polypeptide is GTP cyclohydrolase-2 (Actinobacillus succinogenes (strain ATCC 55618 / DSM 22257 / CCUG 43843 / 130Z)).